Consider the following 336-residue polypeptide: MESLFLLVLGNTEISTIPGISVAGATPELTKITPVADAEYLFHEKPLTIDAIPVTPEGHPTPAIITKAAKELADFPIIVIRGGTYLAPLVPHVHISDVVGRDFRKEIALPEFGEIIKRAKLFGEELNKLPIKELVIGESTPGGTTTAQAVLWALGYEARTSSASPNNPQELKERVIMEGFNRAGIEKGQLSEKPLEALRQFGDPMIATVVGLSLGFRKDIVLAGGTQMLAVSAILKALGEDMKRFMIATTRWVVNDRSATFVETAREIGIITYSADLDFSNSKFKGLRDYERGYVKEGVGAGGATWLAVKSGFSPEDVSEKVEELYERLMRMKSLT.

The protein belongs to the UPF0284 family.

The sequence is that of UPF0284 protein PYRAB00380 from Pyrococcus abyssi (strain GE5 / Orsay).